The primary structure comprises 113 residues: Teretoxin Tan14.1 (113 aa).

The first 21 residues, 1–21 (MALEAQMTLRMFVLVAMASTV), serve as a signal peptide directing secretion. A propeptide spanning residues 22-86 (HVLSSSFSED…DETSSRTGKR (65 aa)) is cleaved from the precursor.

This sequence belongs to the teretoxin N (TN) superfamily. Post-translationally, contains 2 disulfide bonds. In terms of tissue distribution, expressed by the venom duct.

It is found in the secreted. In Terebra anilis (Auger snail), this protein is Teretoxin Tan14.1.